The primary structure comprises 274 residues: Syntaxin-12 (274 aa).

The disordered stretch occupies residues 1 to 20 (MSYGPLDMYRNPGPSGPQPR). Serine 2 carries the N-acetylserine modification. Residues 2 to 250 (SYGPLDMYRN…AYYQKKSRKK (249 aa)) lie on the Cytoplasmic side of the membrane. Residues 34–80 (QRISQATAQIKNLMSQLGTKQDSSKLQENLQQFQHSTNQLAKETNEL) are a coiled coil. Residues 128–150 (EKESIARARAGSRLSAEDRQREE) form a disordered region. Phosphoserine is present on residues serine 139, serine 142, serine 218, and serine 225. Positions 178–240 (LELIKERETA…ERASDQLQRA (63 aa)) constitute a t-SNARE coiled-coil homology domain. A helical; Anchor for type IV membrane protein membrane pass occupies residues 251–271 (MCILVLVLSVIVTVLVVVIWV). Over 272 to 274 (ASK) the chain is Vesicular.

This sequence belongs to the syntaxin family. Associates with the BLOC-1 complex. Interacts with BLOC1S6. Interacts with NAPA and SNAP23. Identified in a complex containing STX6, STX12, VAMP4 and VTI1A. Interacts with GRIPAP1. Forms a complex with GRIP1, GRIA2 and NSG1; controls the intracellular fate of AMPAR and the endosomal sorting of the GRIA2 subunit toward recycling and membrane targeting. Interacts with NSG1. Interacts with TPC1. Interacts (via N-terminus) with VPS13B. As to expression, ubiquitous. Highly expressed in brain.

The protein resides in the endosome membrane. It is found in the golgi apparatus membrane. Its subcellular location is the endomembrane system. The protein localises to the early endosome membrane. It localises to the recycling endosome membrane. SNARE promoting fusion of transport vesicles with target membranes. Together with SNARE STX6, promotes movement of vesicles from endosomes to the cell membrane, and may therefore function in the endocytic recycling pathway. Through complex formation with GRIP1, GRIA2 and NSG1 controls the intracellular fate of AMPAR and the endosomal sorting of the GRIA2 subunit toward recycling and membrane targeting. This Rattus norvegicus (Rat) protein is Syntaxin-12 (Stx12).